The sequence spans 266 residues: Vitamin B12-binding protein (266 aa).

A signal peptide spans 1–22 (MAKSLFRALVALSFLAPLWLNA). One can recognise a Fe/B12 periplasmic-binding domain in the interval 25-266 (RVITLSPANT…QLCNALSQVD (242 aa)). Cyanocob(III)alamin is bound by residues Tyr-50 and 242–246 (DWFER). Cys-183 and Cys-259 form a disulfide bridge.

Belongs to the BtuF family. In terms of assembly, the complex is composed of two ATP-binding proteins (BtuD), two transmembrane proteins (BtuC) and a solute-binding protein (BtuF).

Its subcellular location is the periplasm. Part of the ABC transporter complex BtuCDF involved in vitamin B12 import. Binds vitamin B12 and delivers it to the periplasmic surface of BtuC. This Escherichia coli O6:H1 (strain CFT073 / ATCC 700928 / UPEC) protein is Vitamin B12-binding protein.